The following is a 903-amino-acid chain: Cell division cycle protein 48 homolog MJ1156 (903 aa).

ATP contacts are provided by residues 220–227 (GPPGTGKT) and 493–500 (GPPGTGKT).

It belongs to the AAA ATPase family. CDC48 subfamily.

The chain is Cell division cycle protein 48 homolog MJ1156 from Methanocaldococcus jannaschii (strain ATCC 43067 / DSM 2661 / JAL-1 / JCM 10045 / NBRC 100440) (Methanococcus jannaschii).